Reading from the N-terminus, the 89-residue chain is Small ribosomal subunit protein uS15 (89 aa).

This sequence belongs to the universal ribosomal protein uS15 family. As to quaternary structure, part of the 30S ribosomal subunit. Forms a bridge to the 50S subunit in the 70S ribosome, contacting the 23S rRNA.

One of the primary rRNA binding proteins, it binds directly to 16S rRNA where it helps nucleate assembly of the platform of the 30S subunit by binding and bridging several RNA helices of the 16S rRNA. Functionally, forms an intersubunit bridge (bridge B4) with the 23S rRNA of the 50S subunit in the ribosome. The polypeptide is Small ribosomal subunit protein uS15 (Gloeobacter violaceus (strain ATCC 29082 / PCC 7421)).